Here is a 645-residue protein sequence, read N- to C-terminus: MADMINITFPDGAVKEFPKGTTTAEIAGSISPGLKKKALAGMLDGTLLDLNTPIEQDGTITIVTPESDEALEVLRHSTAHVMAQALKRLFKDRNVKLGVGPVIEGGFYYDVDMDESLTPEDLPKIEKEMKKIIGENLPIERVVVSREEALARYEEVGDPYKIELINDLPEDETITIYEQGEFFDLCRGVHVPSTGKLKEFKLLNLAGAYWRGDSSNKMLQRIYGTAFFKKADLDEHLRLLEEAKERDHRKLGKELGIFALSQKVGQGLPLWLPKGATIRRIIERYIVDKEEKLGYQHVYTPVLASSELYKTSGHWDHYKDDMFPTMEMENEELVLRPMNCPHHMMVYKTEMRSYRQLPLRIAELGLMHRYEMSGAVSGLQRVRGMTLNDAHIFCRPDQIKDEFVRVVRLIQAVYEDFGLKNYSFRLSYRDPEDKEKYFDDDNMWNKAQGMLKEAMDELELEYFEAEGEAAFYGPKLDVQVRTALGKDETLSTVQLDFLLPERFDLTYVGEDGQPHRPVVVHRGVVSTMERFVAFLLEEYKGAFPTWLAPVQVQVIPVSPEAHLEYAKNVQETLQQAGIRVEIDERDEKIGYKIREAQMQKIPYMLVLGDKEVEANGVNVRKYGEKDSSSMGLDEFVRHVAREAKK.

Positions 3–64 (DMINITFPDG…EQDGTITIVT (62 aa)) constitute a TGS domain. The segment at 247–544 (DHRKLGKELG…LLEEYKGAFP (298 aa)) is catalytic. Residues C340, H391, and H521 each coordinate Zn(2+).

Belongs to the class-II aminoacyl-tRNA synthetase family. Homodimer. It depends on Zn(2+) as a cofactor.

Its subcellular location is the cytoplasm. The catalysed reaction is tRNA(Thr) + L-threonine + ATP = L-threonyl-tRNA(Thr) + AMP + diphosphate + H(+). Its function is as follows. Catalyzes the attachment of threonine to tRNA(Thr) in a two-step reaction: L-threonine is first activated by ATP to form Thr-AMP and then transferred to the acceptor end of tRNA(Thr). Also edits incorrectly charged L-seryl-tRNA(Thr). In Halalkalibacterium halodurans (strain ATCC BAA-125 / DSM 18197 / FERM 7344 / JCM 9153 / C-125) (Bacillus halodurans), this protein is Threonine--tRNA ligase.